Consider the following 203-residue polypeptide: Large ribosomal subunit protein bL25 (203 aa).

This sequence belongs to the bacterial ribosomal protein bL25 family. CTC subfamily. Part of the 50S ribosomal subunit; part of the 5S rRNA/L5/L18/L25 subcomplex. Contacts the 5S rRNA. Binds to the 5S rRNA independently of L5 and L18.

Functionally, this is one of the proteins that binds to the 5S RNA in the ribosome where it forms part of the central protuberance. In Cellvibrio japonicus (strain Ueda107) (Pseudomonas fluorescens subsp. cellulosa), this protein is Large ribosomal subunit protein bL25.